Reading from the N-terminus, the 330-residue chain is Protein LEG1 homolog (330 aa).

Positions 1–20 (MAFLPSWVCVLVGSFSASLA) are cleaved as a signal peptide. Residues Asn24 and Asn69 are each glycosylated (N-linked (GlcNAc...) asparagine).

It belongs to the LEG1 family. In terms of tissue distribution, detected in saliva and in hypomineralized dental enamel (at protein level).

It is found in the secreted. Functionally, may be involved in early liver development. This is Protein LEG1 homolog from Homo sapiens (Human).